Reading from the N-terminus, the 540-residue chain is 2-isopropylmalate synthase (540 aa).

The Pyruvate carboxyltransferase domain maps to 8–271; that stretch reads VLIFDTTLRD…NPFFGREEDS (264 aa). The Mn(2+) site is built by D17, H208, H210, and N244. Residues 408-540 are regulatory domain; sequence QLKLVQVSCG…PVVLESRPTL (133 aa).

It belongs to the alpha-IPM synthase/homocitrate synthase family. LeuA type 1 subfamily. As to quaternary structure, homodimer. It depends on Mn(2+) as a cofactor.

The protein localises to the cytoplasm. The enzyme catalyses 3-methyl-2-oxobutanoate + acetyl-CoA + H2O = (2S)-2-isopropylmalate + CoA + H(+). It functions in the pathway amino-acid biosynthesis; L-leucine biosynthesis; L-leucine from 3-methyl-2-oxobutanoate: step 1/4. In terms of biological role, catalyzes the condensation of the acetyl group of acetyl-CoA with 3-methyl-2-oxobutanoate (2-ketoisovalerate) to form 3-carboxy-3-hydroxy-4-methylpentanoate (2-isopropylmalate). This chain is 2-isopropylmalate synthase, found in Synechococcus sp. (strain CC9605).